We begin with the raw amino-acid sequence, 343 residues long: Mitochondrial amidoxime-reducing component 1 (343 aa).

Topologically, residues 1-25 (MSNTVFSGAVGPLRAAALSISRHRL) are mitochondrial matrix. A helical; Signal-anchor for type II membrane protein membrane pass occupies residues 26 to 44 (PLLCAAGLGLTAVASWMWW). Residues 45–343 (RKRQGEAEDL…DPVYRVTRKG (299 aa)) lie on the Cytoplasmic side of the membrane. Mo-molybdopterin contacts are provided by lysine 69, serine 70, and arginine 94. Positions 95-186 (HWLVVTEEGN…SSQPYRLVHF (92 aa)) are MOSC N-terminal region. In terms of domain architecture, MOSC spans 181-339 (YRLVHFEADV…IRVGDPVYRV (159 aa)). Serine 215, arginine 242, arginine 276, cysteine 277, and tyrosine 321 together coordinate Mo-molybdopterin.

Requires Mo-molybdopterin as cofactor.

It localises to the mitochondrion outer membrane. Its subcellular location is the membrane. It carries out the reaction N(omega)-hydroxy-L-arginine + 2 Fe(II)-[cytochrome b5] + 2 H(+) = L-arginine + 2 Fe(III)-[cytochrome b5] + H2O. In terms of biological role, catalyzes the reduction of N-oxygenated molecules, acting as a counterpart of cytochrome P450 and flavin-containing monooxygenases in metabolic cycles. As a component of prodrug-converting system, reduces a multitude of N-hydroxylated prodrugs particularly amidoximes, leading to increased drug bioavailability. May be involved in mitochondrial N(omega)-hydroxy-L-arginine (NOHA) reduction, regulating endogenous nitric oxide levels and biosynthesis. Postulated to cleave the N-OH bond of N-hydroxylated substrates in concert with electron transfer from NADH to cytochrome b5 reductase then to cytochrome b5, the ultimate electron donor that primes the active site for substrate reduction. This chain is Mitochondrial amidoxime-reducing component 1 (mtarc1), found in Xenopus laevis (African clawed frog).